Here is a 169-residue protein sequence, read N- to C-terminus: Calfumirin-1 (169 aa).

4 EF-hand domains span residues asparagine 6–phenylalanine 41, asparagine 42–leucine 77, glutamate 93–lysine 128, and aspartate 129–leucine 164. Ca(2+) contacts are provided by aspartate 19, asparagine 21, aspartate 23, glutamate 25, glutamate 30, aspartate 55, aspartate 57, aspartate 59, lysine 61, glutamate 66, aspartate 108, asparagine 110, aspartate 112, glutamate 117, aspartate 142, asparagine 144, aspartate 146, threonine 148, and glutamate 153.

May be involved in the phase-shift of cells from growth to differentiation. The chain is Calfumirin-1 (cafA) from Dictyostelium discoideum (Social amoeba).